The following is a 298-amino-acid chain: tRNA pseudouridine synthase B (298 aa).

The active-site Nucleophile is the aspartate 46.

The protein belongs to the pseudouridine synthase TruB family. Type 1 subfamily.

The enzyme catalyses uridine(55) in tRNA = pseudouridine(55) in tRNA. In terms of biological role, responsible for synthesis of pseudouridine from uracil-55 in the psi GC loop of transfer RNAs. This chain is tRNA pseudouridine synthase B, found in Paracoccus denitrificans (strain Pd 1222).